Reading from the N-terminus, the 156-residue chain is Small ribosomal subunit protein uS7 (156 aa).

It belongs to the universal ribosomal protein uS7 family. As to quaternary structure, part of the 30S ribosomal subunit. Contacts proteins S9 and S11.

One of the primary rRNA binding proteins, it binds directly to 16S rRNA where it nucleates assembly of the head domain of the 30S subunit. Is located at the subunit interface close to the decoding center, probably blocks exit of the E-site tRNA. This Salinispora tropica (strain ATCC BAA-916 / DSM 44818 / JCM 13857 / NBRC 105044 / CNB-440) protein is Small ribosomal subunit protein uS7.